A 766-amino-acid chain; its full sequence is Subtilisin-like protease SBT3.13 (766 aa).

Positions 1–21 are cleaved as a signal peptide; sequence MNNSLQSSKLVLLLAIALVLF. Positions 22–120 are cleaved as a propeptide — activation peptide; that stretch reads LNTELDFLTA…VIPNRIRKLK (99 aa). One can recognise an Inhibitor I9 domain in the interval 41–119; it reads VYIVYLGERE…HVIPNRIRKL (79 aa). A Peptidase S8 domain is found at 134 to 618; the sequence is PTSFSSLSSV…GGLVNPEKAA (485 aa). Asp162 functions as the Charge relay system in the catalytic mechanism. 2 N-linked (GlcNAc...) asparagine glycosylation sites follow: Asn195 and Asn223. Catalysis depends on His239, which acts as the Charge relay system. N-linked (GlcNAc...) asparagine glycosylation is found at Asn254 and Asn389. The active-site Charge relay system is the Ser549. Asn641 is a glycosylation site (N-linked (GlcNAc...) asparagine).

The protein belongs to the peptidase S8 family.

The protein localises to the secreted. This Arabidopsis thaliana (Mouse-ear cress) protein is Subtilisin-like protease SBT3.13.